A 250-amino-acid polypeptide reads, in one-letter code: MAEQASSFTDRLAARFAGAQIAVALPRGEVTLEVAAADWHATCLALRDELGFEQLSDLCGVDYLGYGSDEWDTADVSSQGFSRGVEGKAVGRFAWGEFPSQESSAGAQPQQLPKQRFAVVAQLISYQHNQRLRVRCYAPDEQVPVVASLTDIWPGVNWFEREAFDLFGIVFDGHPDLRRILTDYGFVGHPFRKDFPLIGNVEVRYDEERKRVVYEPVTSVEPRVGVPRVIRDDARYETAAGEVGKSETAK.

This sequence belongs to the complex I 30 kDa subunit family. NDH-1 is composed of 14 different subunits. Subunits NuoB, C, D, E, F, and G constitute the peripheral sector of the complex.

Its subcellular location is the cell inner membrane. It catalyses the reaction a quinone + NADH + 5 H(+)(in) = a quinol + NAD(+) + 4 H(+)(out). In terms of biological role, NDH-1 shuttles electrons from NADH, via FMN and iron-sulfur (Fe-S) centers, to quinones in the respiratory chain. The immediate electron acceptor for the enzyme in this species is believed to be ubiquinone. Couples the redox reaction to proton translocation (for every two electrons transferred, four hydrogen ions are translocated across the cytoplasmic membrane), and thus conserves the redox energy in a proton gradient. The protein is NADH-quinone oxidoreductase subunit C of Xanthomonas euvesicatoria pv. vesicatoria (strain 85-10) (Xanthomonas campestris pv. vesicatoria).